The primary structure comprises 344 residues: Phosphate acyltransferase (344 aa).

Belongs to the PlsX family. As to quaternary structure, homodimer. Probably interacts with PlsY.

The protein localises to the cytoplasm. It carries out the reaction a fatty acyl-[ACP] + phosphate = an acyl phosphate + holo-[ACP]. The protein operates within lipid metabolism; phospholipid metabolism. Catalyzes the reversible formation of acyl-phosphate (acyl-PO(4)) from acyl-[acyl-carrier-protein] (acyl-ACP). This enzyme utilizes acyl-ACP as fatty acyl donor, but not acyl-CoA. The protein is Phosphate acyltransferase of Cyanothece sp. (strain PCC 7425 / ATCC 29141).